Here is a 731-residue protein sequence, read N- to C-terminus: Fatty acid oxidation complex subunit alpha (731 aa).

The enoyl-CoA hydratase stretch occupies residues 15-204 (TEKTSAFSLT…RQGLVDEAVP (190 aa)). Residues 320–729 (KPIHRVGILG…FYPPADKDNS (410 aa)) are 3-hydroxyacyl-CoA dehydrogenase.

In the N-terminal section; belongs to the enoyl-CoA hydratase/isomerase family. It in the central section; belongs to the 3-hydroxyacyl-CoA dehydrogenase family. As to quaternary structure, heterotetramer of two alpha chains (FadJ) and two beta chains (FadI).

It localises to the cytoplasm. It catalyses the reaction a (3S)-3-hydroxyacyl-CoA = a (2E)-enoyl-CoA + H2O. The enzyme catalyses a 4-saturated-(3S)-3-hydroxyacyl-CoA = a (3E)-enoyl-CoA + H2O. It carries out the reaction a (3S)-3-hydroxyacyl-CoA + NAD(+) = a 3-oxoacyl-CoA + NADH + H(+). The catalysed reaction is (3S)-3-hydroxybutanoyl-CoA = (3R)-3-hydroxybutanoyl-CoA. Its pathway is lipid metabolism; fatty acid beta-oxidation. Catalyzes the formation of a hydroxyacyl-CoA by addition of water on enoyl-CoA. Also exhibits 3-hydroxyacyl-CoA epimerase and 3-hydroxyacyl-CoA dehydrogenase activities. This Pectobacterium atrosepticum (strain SCRI 1043 / ATCC BAA-672) (Erwinia carotovora subsp. atroseptica) protein is Fatty acid oxidation complex subunit alpha.